Reading from the N-terminus, the 327-residue chain is S-adenosylmethionine/S-adenosylhomocysteine transporter (327 aa).

10 helical membrane passes run 22-42 (CDMA…SFAL), 53-73 (LFVT…LLLC), 85-105 (IMPI…LEFI), 114-134 (TACF…YVQL), 143-163 (LGGL…GGSE), 165-185 (VAEW…ATCL), 202-222 (SLSM…LSLI), 240-260 (LFLQ…YNLF), 271-291 (FLSF…WLLL), and 294-314 (SFPP…RLIY). In terms of domain architecture, EamA 1 spans 34-157 (FIWSSSFALS…LGLVSYLVYL (124 aa)). An EamA 2 domain is found at 189-313 (GWTLLRKLGR…GFMVLGCRLI (125 aa)).

Belongs to the drug/metabolite transporter (DMT) superfamily. 10 TMS drug/metabolite exporter (DME) (TC 2.A.7.3) family.

The protein resides in the cell membrane. With respect to regulation, CCCP treatment reduces SAM intracellular uptake by 50%. Transports S-adenosylmethionine (SAM) and S-adenosylhomocysteine (SAH). Allows bacteria to acquire SAM from the eukaryotic host cell and to likely remove the toxic by-product SAH. The polypeptide is S-adenosylmethionine/S-adenosylhomocysteine transporter (Chlamydia trachomatis serovar L2 (strain ATCC VR-902B / DSM 19102 / 434/Bu)).